Consider the following 363-residue polypeptide: 3-dehydroquinate synthase (363 aa).

NAD(+)-binding positions include 70–75 (SGETSK), 104–108 (GVIGD), 128–129 (TT), Lys-141, Lys-150, and 168–171 (TLDT). Residues Glu-183, His-245, and His-262 each contribute to the Zn(2+) site.

Belongs to the sugar phosphate cyclases superfamily. Dehydroquinate synthase family. It depends on Co(2+) as a cofactor. The cofactor is Zn(2+). Requires NAD(+) as cofactor.

It localises to the cytoplasm. The enzyme catalyses 7-phospho-2-dehydro-3-deoxy-D-arabino-heptonate = 3-dehydroquinate + phosphate. Its pathway is metabolic intermediate biosynthesis; chorismate biosynthesis; chorismate from D-erythrose 4-phosphate and phosphoenolpyruvate: step 2/7. Functionally, catalyzes the conversion of 3-deoxy-D-arabino-heptulosonate 7-phosphate (DAHP) to dehydroquinate (DHQ). In Alkaliphilus oremlandii (strain OhILAs) (Clostridium oremlandii (strain OhILAs)), this protein is 3-dehydroquinate synthase.